The following is a 316-amino-acid chain: Ribosomal RNA small subunit methyltransferase H (316 aa).

S-adenosyl-L-methionine is bound by residues 35–37, D55, F79, D101, and Q108; that span reads GGH.

This sequence belongs to the methyltransferase superfamily. RsmH family.

Its subcellular location is the cytoplasm. The enzyme catalyses cytidine(1402) in 16S rRNA + S-adenosyl-L-methionine = N(4)-methylcytidine(1402) in 16S rRNA + S-adenosyl-L-homocysteine + H(+). In terms of biological role, specifically methylates the N4 position of cytidine in position 1402 (C1402) of 16S rRNA. The chain is Ribosomal RNA small subunit methyltransferase H from Aliivibrio fischeri (strain ATCC 700601 / ES114) (Vibrio fischeri).